The primary structure comprises 960 residues: Collagenase ColA (960 aa).

An N-terminal signal peptide occupies residues 1–30 (MNKNLRFTQMMIGISTMALSFGSIQTQVSA). Residues 31–92 (EETAPYNILQ…KRDEIQLKQS (62 aa)) constitute a propeptide that is removed on maturation. Residues 93-365 (YTLAELNKMP…AVEQMKTNYG (273 aa)) are activator domain. Positions 93-764 (YTLAELNKMP…VFHGVATEEK (672 aa)) are S1 metalloprotease domain. The tract at residues 375–644 (DLQKIREEGK…MQQLIDNQDK (270 aa)) is catalytic subdomain. A Zn(2+)-binding site is contributed by histidine 500. The active site involves glutamate 501. 2 residues coordinate Zn(2+): histidine 504 and glutamate 532. Residues 652-764 (NDYLIQHAPK…VFHGVATEEK (113 aa)) are helper subdomain. Residues 768–849 (TTIVNMNGPY…ESKEQTKVTV (82 aa)) enclose the PKD domain. Positions 836–845 (SRGKESKEQT) are enriched in basic and acidic residues. The tract at residues 836–859 (SRGKESKEQTKVTVKQDPQTSESY) is disordered. A compositionally biased stretch (polar residues) spans 846 to 857 (KVTVKQDPQTSE). The segment at 852–960 (DPQTSESYEE…KNGEYSLLVK (109 aa)) is collagen-binding domain.

The protein belongs to the peptidase M9B family. Collagenase subfamily. Ca(2+) is required as a cofactor. Zn(2+) serves as cofactor.

It localises to the secreted. It catalyses the reaction Digestion of native collagen in the triple helical region at Xaa-|-Gly bonds. With synthetic peptides, a preference is shown for Gly at P3 and P1', Pro and Ala at P2 and P2', and hydroxyproline, Ala or Arg at P3'.. In terms of biological role, acts as a true collagenase, which is highly active and efficiently targets native tropocollagen. In vitro, can also cleave gelatin and the synthetic peptide FALGPA (furylacryloyl-Leu-Gly-Pro-Ala). May contribute to bacterial virulence in endophthalmitis or opportunistic infections via collagen degradation in the host extracellular matrix (ECM). The sequence is that of Collagenase ColA from Bacillus cereus (strain ATCC 14579 / DSM 31 / CCUG 7414 / JCM 2152 / NBRC 15305 / NCIMB 9373 / NCTC 2599 / NRRL B-3711).